Consider the following 495-residue polypeptide: Siroheme synthase 2 (495 aa).

Residues 1–205 (MDHYPIFLNL…GREREAEQAM (205 aa)) are precorrin-2 dehydrogenase /sirohydrochlorin ferrochelatase. Residues 22-23 (ET) and 43-44 (PD) contribute to the NAD(+) site. Position 130 is a phosphoserine (S130). The tract at residues 220-495 (GEVYLVGAGP…HPAPADTEQA (276 aa)) is uroporphyrinogen-III C-methyltransferase. P229 serves as a coordination point for S-adenosyl-L-methionine. The Proton acceptor role is filled by D252. Catalysis depends on K274, which acts as the Proton donor. S-adenosyl-L-methionine-binding positions include 305-307 (GGD), I310, 335-336 (TA), M387, and A416. Residues 471-495 (FPEHGCLRGEPRPTRHPAPADTEQA) are disordered.

It in the N-terminal section; belongs to the precorrin-2 dehydrogenase / sirohydrochlorin ferrochelatase family. This sequence in the C-terminal section; belongs to the precorrin methyltransferase family.

The catalysed reaction is uroporphyrinogen III + 2 S-adenosyl-L-methionine = precorrin-2 + 2 S-adenosyl-L-homocysteine + H(+). The enzyme catalyses precorrin-2 + NAD(+) = sirohydrochlorin + NADH + 2 H(+). It carries out the reaction siroheme + 2 H(+) = sirohydrochlorin + Fe(2+). The protein operates within cofactor biosynthesis; adenosylcobalamin biosynthesis; precorrin-2 from uroporphyrinogen III: step 1/1. It participates in cofactor biosynthesis; adenosylcobalamin biosynthesis; sirohydrochlorin from precorrin-2: step 1/1. Its pathway is porphyrin-containing compound metabolism; siroheme biosynthesis; precorrin-2 from uroporphyrinogen III: step 1/1. It functions in the pathway porphyrin-containing compound metabolism; siroheme biosynthesis; siroheme from sirohydrochlorin: step 1/1. The protein operates within porphyrin-containing compound metabolism; siroheme biosynthesis; sirohydrochlorin from precorrin-2: step 1/1. Functionally, multifunctional enzyme that catalyzes the SAM-dependent methylations of uroporphyrinogen III at position C-2 and C-7 to form precorrin-2 via precorrin-1. Then it catalyzes the NAD-dependent ring dehydrogenation of precorrin-2 to yield sirohydrochlorin. Finally, it catalyzes the ferrochelation of sirohydrochlorin to yield siroheme. This is Siroheme synthase 2 from Halorhodospira halophila (strain DSM 244 / SL1) (Ectothiorhodospira halophila (strain DSM 244 / SL1)).